A 233-amino-acid chain; its full sequence is Large ribosomal subunit protein uL1 (233 aa).

The protein belongs to the universal ribosomal protein uL1 family. In terms of assembly, part of the 50S ribosomal subunit.

Binds directly to 23S rRNA. The L1 stalk is quite mobile in the ribosome, and is involved in E site tRNA release. Functionally, protein L1 is also a translational repressor protein, it controls the translation of the L11 operon by binding to its mRNA. The sequence is that of Large ribosomal subunit protein uL1 from Deinococcus geothermalis (strain DSM 11300 / CIP 105573 / AG-3a).